We begin with the raw amino-acid sequence, 207 residues long: MKLSEKFCVFLFFLLFTSTTHATGIGSLKSFMENARTVRADFAQTVLDKSRHIVQTASGAMQFERPGKFRWIYEKPYEQLIVGDGERIWFYDHDLAQVTVRKLDAAIGSSPAALLAGNNDIEKNFHLLEIGLQGNIEWVEATPKTRESTFERVLLGFTLEGILRVMELHDNFGQVTVFEFSGVEQNRKLPPELFKFSPPAGVDVISE.

A signal peptide spans 1–22 (MKLSEKFCVFLFFLLFTSTTHA).

This sequence belongs to the LolA family. In terms of assembly, monomer.

It is found in the periplasm. Functionally, participates in the translocation of lipoproteins from the inner membrane to the outer membrane. Only forms a complex with a lipoprotein if the residue after the N-terminal Cys is not an aspartate (The Asp acts as a targeting signal to indicate that the lipoprotein should stay in the inner membrane). In Nitrosospira multiformis (strain ATCC 25196 / NCIMB 11849 / C 71), this protein is Outer-membrane lipoprotein carrier protein.